Consider the following 1050-residue polypeptide: Ankyrin repeat domain-containing protein 27 (1050 aa).

Residues Met-1–Pro-372 are sufficient for GEF activity towards RAB21. The 139-residue stretch at Ala-233–Pro-371 folds into the VPS9 domain. ANK repeat units lie at residues Ser-396–Ala-426, Arg-462–Ala-491, His-495–Val-524, Asn-528–Ile-560, Lys-564–Ile-593, and Leu-597–Ser-627. A sufficient for interaction with VPS29 region spans residues Ser-396–Asp-460. Residues Pro-451–Thr-600 are interaction with RAB38. The tract at residues Pro-451–Val-730 is interaction with RAB32. The segment at Ala-630 to Lys-665 is disordered. The span at Ser-638–Ser-658 shows a compositional bias: low complexity. The segment at Ser-658–Asp-707 is required for interaction with VAMP7. ANK repeat units follow at residues Arg-668 to Asp-698, Asp-743 to Ala-772, Asp-776 to Lys-805, Ser-809 to Thr-838, and Lys-842 to Val-871. The tract at residues Thr-692–Ser-746 is sufficient for interaction with VPS29. 2 positions are modified to phosphoserine: Ser-962 and Ser-970. Residues Pro-987–Ser-1050 are disordered. Basic and acidic residues predominate over residues Ala-994–Arg-1007. Thr-1023 carries the phosphothreonine modification. Polar residues predominate over residues Ser-1040 to Ser-1050.

Interacts with RAB21 (GDP-bound form), VPS29, KIF5A, KIF5C, GOLGA4. Interacts with RAB32 (GTP-bound form), RAB38 (GTP-bound form), VAMP7. Interacts with low affinity with RAB5. ANKRD27:RAB32 heterodimers can homodimerize to form tetramers. Can interact with RAB38 or RAB32, VPS29 and VAMP7 simultaneously. A decreased interaction with RAB32 seen in the presence of SGSM2.

The protein localises to the early endosome. It is found in the late endosome. It localises to the cytoplasmic vesicle membrane. The protein resides in the lysosome. Its subcellular location is the cell membrane. The protein localises to the melanosome. In terms of biological role, may be a guanine exchange factor (GEF) for Rab21, Rab32 and Rab38 and regulate endosome dynamics. May regulate the participation of VAMP7 in membrane fusion events; in vitro inhibits VAMP7-mediated SNARE complex formation by trapping VAMP7 in a closed, fusogenically inactive conformation. Involved in peripheral melanosomal distribution of TYRP1 in melanocytes; the function, which probably is implicating vesicle-trafficking, includes cooperation with Rab32, Rab38 and VAMP7. Involved in the regulation of neurite growth; the function seems to require its GEF activity, probably towards Rab21, and VAMP7 but not Rab32/38. Proposed to be involved in Golgi sorting of VAMP7 and transport of VAMP7 vesicles to the cell surface; the function seems to implicate kinesin heavy chain isoform 5 proteins, GOLGA4, RAB21 and MACF1. Required for the colocalization of VAMP7 and Rab21, probably on TGN sites. Involved in GLUT1 endosome-to-plasma membrane trafficking; the function is dependent of association with VPS29. Regulates the proper trafficking of melanogenic enzymes TYR, TYRP1 and DCT/TYRP2 to melanosomes in melanocytes. This chain is Ankyrin repeat domain-containing protein 27 (ANKRD27), found in Pongo abelii (Sumatran orangutan).